The following is a 760-amino-acid chain: Formin-like protein 8 (760 aa).

The N-terminal stretch at 1 to 29 (MAAMFNHPWPNLTLIYFFFIVVLPFQSLS) is a signal peptide. Residues 52–63 (PLLPPSSNPSPP) are compositionally biased toward pro residues. The segment at 52-71 (PLLPPSSNPSPPSNNSSSSD) is disordered. A helical transmembrane segment spans residues 78 to 98 (AVLITAASTLLVAGVFFFCLQ). Residues 204–313 (TEIPLLRGRS…VKLKPLHWDK (110 aa)) are disordered. Positions 253-274 (TPSPPPPIKKGSSPSPPPPPPV) are enriched in pro residues. One can recognise an FH2 domain in the interval 296–732 (SGGETSKQVK…GSPISPSSQR (437 aa)).

This sequence belongs to the formin-like family. Class-I subfamily. As to quaternary structure, interacts with profilin.

It localises to the cell membrane. Might be involved in the organization and polarity of the actin cytoskeleton. Interacts with the barbed end of actin filaments and nucleates actin-filament polymerization in vitro. In Arabidopsis thaliana (Mouse-ear cress), this protein is Formin-like protein 8 (FH8).